The following is a 512-amino-acid chain: Apolipoprotein N-acyltransferase (512 aa).

The next 6 helical transmembrane spans lie at 5–25 (LDKYWQHPALYWPLLILFAAA), 56–76 (FAVSSAYLFGLTAYTTQFYWI), 92–112 (VPLTFLLPAYLALYPALCFWL), 118–138 (LPRGIKIGLVLPILWTLTEFA), 168–188 (FGGIHMVTLATAFLGVWLVLA), and 195–215 (SGKRLLPIILIAALLAAGYTA). The 245-residue stretch at 233–477 (LQGNIDQTLK…ETVLEGHIKG (245 aa)) folds into the CN hydrolase domain. The active-site Proton acceptor is Glu-271. Lys-337 is a catalytic residue. Cys-389 functions as the Nucleophile in the catalytic mechanism. A helical transmembrane segment spans residues 487–507 (TGSSWWLMGILTLAALILFIF).

Belongs to the CN hydrolase family. Apolipoprotein N-acyltransferase subfamily.

The protein resides in the cell inner membrane. The enzyme catalyses N-terminal S-1,2-diacyl-sn-glyceryl-L-cysteinyl-[lipoprotein] + a glycerophospholipid = N-acyl-S-1,2-diacyl-sn-glyceryl-L-cysteinyl-[lipoprotein] + a 2-acyl-sn-glycero-3-phospholipid + H(+). It participates in protein modification; lipoprotein biosynthesis (N-acyl transfer). Catalyzes the phospholipid dependent N-acylation of the N-terminal cysteine of apolipoprotein, the last step in lipoprotein maturation. This Neisseria meningitidis serogroup A / serotype 4A (strain DSM 15465 / Z2491) protein is Apolipoprotein N-acyltransferase.